Consider the following 94-residue polypeptide: UPF0298 protein SEQ_1830 (94 aa).

The protein belongs to the UPF0298 family.

It is found in the cytoplasm. In Streptococcus equi subsp. equi (strain 4047), this protein is UPF0298 protein SEQ_1830.